The following is a 456-amino-acid chain: RNA polymerase II-associated protein 1 homolog (456 aa).

The interval 382-456 is disordered; it reads LRSVEGSLNE…PVEQLQNEED (75 aa). At Ser-388 the chain carries Phosphoserine. The segment covering 396–406 has biased composition (basic and acidic residues); it reads EEKPAESREQL. 2 stretches are compositionally biased toward polar residues: residues 408–433 and 441–456; these read SAEQTNGVKPETQAQNMSASESQANS and GNTQPSPVEQLQNEED.

The protein belongs to the PAF1 family.

The protein localises to the cytoplasm. It localises to the nucleus. This chain is RNA polymerase II-associated protein 1 homolog, found in Schizosaccharomyces pombe (strain 972 / ATCC 24843) (Fission yeast).